The primary structure comprises 443 residues: Protein king tubby (443 aa).

2 disordered regions span residues 57-85 (TNGSPGGITPVAVNTSRNHSNNMRSLSTI) and 98-189 (HELE…ESEG). The span at 68 to 85 (AVNTSRNHSNNMRSLSTI) shows a compositional bias: polar residues. Positions 113–128 (QHQQSASHSANSTQSQ) are enriched in low complexity. Ser136 bears the Phosphoserine mark. Residues 148–160 (NRNVAAAAPVRPA) show a composition bias toward low complexity. Over residues 177–186 (NGTGNGTGGE) the composition is skewed to gly residues.

It belongs to the TUB family.

Its subcellular location is the cytoplasm. The protein resides in the nucleus. It is found in the cell projection. It localises to the cilium membrane. The protein localises to the rhabdomere. The protein is Protein king tubby of Drosophila yakuba (Fruit fly).